A 124-amino-acid chain; its full sequence is Ragulator complex protein LAMTOR3 (124 aa).

The segment at 57 to 70 (TDQGSKLGLSKNKS) is required for interaction with LAMTOR2.

This sequence belongs to the LAMTOR3 family. As to quaternary structure, part of the Ragulator complex composed of LAMTOR1, LAMTOR2, LAMTOR3, LAMTOR4 and LAMTOR5. LAMTOR4 and LAMTOR5 form a heterodimer that interacts, through LAMTOR1, with a LAMTOR2, LAMTOR3 heterodimer. Interacts with LAMTOR1 and LAMTOR2; the interaction is direct. The Ragulator complex interacts with both the mTORC1 complex and heterodimers constituted of the Rag GTPases RagA/RRAGA, RagB/RRAGB, RagC/RRAGC and RagD/RRAGD; regulated by amino acid availability. The Ragulator complex interacts with SLC38A9; the probable amino acid sensor. Component of the lysosomal folliculin complex (LFC), composed of FLCN, FNIP1 (or FNIP2), RagA/RRAGA or RagB/RRAGB GDP-bound, RagC/RRAGC or RagD/RRAGD GTP-bound, and Ragulator. Interacts with MAP2K1/MEK1 and MAPK2. Interacts with MORG1.

It is found in the late endosome membrane. As part of the Ragulator complex it is involved in amino acid sensing and activation of mTORC1, a signaling complex promoting cell growth in response to growth factors, energy levels, and amino acids. Activated by amino acids through a mechanism involving the lysosomal V-ATPase, the Ragulator plays a dual role for the small GTPases Rag (RagA/RRAGA, RagB/RRAGB, RagC/RRAGC and/or RagD/RRAGD): it (1) acts as a guanine nucleotide exchange factor (GEF), activating the small GTPases Rag and (2) mediates recruitment of Rag GTPases to the lysosome membrane. Activated Ragulator and Rag GTPases function as a scaffold recruiting mTORC1 to lysosomes where it is in turn activated. Adapter protein that enhances the efficiency of the MAP kinase cascade facilitating the activation of MAPK2. This Homo sapiens (Human) protein is Ragulator complex protein LAMTOR3.